Consider the following 324-residue polypeptide: Homoserine kinase (324 aa).

Residue 100 to 110 (PLSSGMGSSAA) participates in ATP binding.

The protein belongs to the GHMP kinase family. Homoserine kinase subfamily.

The protein resides in the cytoplasm. It carries out the reaction L-homoserine + ATP = O-phospho-L-homoserine + ADP + H(+). It participates in amino-acid biosynthesis; L-threonine biosynthesis; L-threonine from L-aspartate: step 4/5. Its function is as follows. Catalyzes the ATP-dependent phosphorylation of L-homoserine to L-homoserine phosphate. In Chlorobaculum tepidum (strain ATCC 49652 / DSM 12025 / NBRC 103806 / TLS) (Chlorobium tepidum), this protein is Homoserine kinase.